A 248-amino-acid polypeptide reads, in one-letter code: Triosephosphate isomerase (248 aa).

Positions 12 and 14 each coordinate substrate. An igE-binding region spans residues 16-30 (NGDRAGIDSIISFMK). His-95 acts as the Electrophile in catalysis. Glu-165 serves as the catalytic Proton acceptor. 2 igE-binding regions span residues 166–180 (PVWA…TPEQ) and 205–219 (RIIY…NCKE).

This sequence belongs to the triosephosphate isomerase family. As to quaternary structure, homodimer. In terms of tissue distribution, expressed in skeletal muscle (at protein level).

Its subcellular location is the cytoplasm. It carries out the reaction D-glyceraldehyde 3-phosphate = dihydroxyacetone phosphate. It catalyses the reaction dihydroxyacetone phosphate = methylglyoxal + phosphate. The protein operates within carbohydrate biosynthesis; gluconeogenesis. It participates in carbohydrate degradation; glycolysis; D-glyceraldehyde 3-phosphate from glycerone phosphate: step 1/1. Functionally, triosephosphate isomerase is an extremely efficient metabolic enzyme that catalyzes the interconversion between dihydroxyacetone phosphate (DHAP) and D-glyceraldehyde-3-phosphate (G3P) in glycolysis and gluconeogenesis. In terms of biological role, it is also responsible for the non-negligible production of methylglyoxal a reactive cytotoxic side-product that modifies and can alter proteins, DNA and lipids. The sequence is that of Triosephosphate isomerase from Procambarus clarkii (Red swamp crayfish).